Here is a 352-residue protein sequence, read N- to C-terminus: UDP-N-acetylglucosamine--N-acetylmuramyl-(pentapeptide) pyrophosphoryl-undecaprenol N-acetylglucosamine transferase (352 aa).

Residues 14–16, Asn124, Arg164, Ser185, and Gln285 each bind UDP-N-acetyl-alpha-D-glucosamine; that span reads TGG.

It belongs to the glycosyltransferase 28 family. MurG subfamily.

It is found in the cell inner membrane. It carries out the reaction di-trans,octa-cis-undecaprenyl diphospho-N-acetyl-alpha-D-muramoyl-L-alanyl-D-glutamyl-meso-2,6-diaminopimeloyl-D-alanyl-D-alanine + UDP-N-acetyl-alpha-D-glucosamine = di-trans,octa-cis-undecaprenyl diphospho-[N-acetyl-alpha-D-glucosaminyl-(1-&gt;4)]-N-acetyl-alpha-D-muramoyl-L-alanyl-D-glutamyl-meso-2,6-diaminopimeloyl-D-alanyl-D-alanine + UDP + H(+). It functions in the pathway cell wall biogenesis; peptidoglycan biosynthesis. In terms of biological role, cell wall formation. Catalyzes the transfer of a GlcNAc subunit on undecaprenyl-pyrophosphoryl-MurNAc-pentapeptide (lipid intermediate I) to form undecaprenyl-pyrophosphoryl-MurNAc-(pentapeptide)GlcNAc (lipid intermediate II). The polypeptide is UDP-N-acetylglucosamine--N-acetylmuramyl-(pentapeptide) pyrophosphoryl-undecaprenol N-acetylglucosamine transferase (Chlamydia trachomatis serovar L2 (strain ATCC VR-902B / DSM 19102 / 434/Bu)).